The following is a 635-amino-acid chain: Cationic amino acid transporter 2, vacuolar (635 aa).

Topologically, residues 1–48 (MGFLVDTQKEGGGHSWGYVRSLVRRKQVDSANGQSHGHQLARALTVPH) are cytoplasmic. A helical membrane pass occupies residues 49 to 69 (LVAIGVGATIGAGVYILVGTV). At 70-76 (AREHSGP) the chain is on the vacuolar side. Residues 77–97 (SLALSFLIAGIAAGLSAFCYA) traverse the membrane as a helical segment. At 98-108 (ELSSRCPSAGS) the chain is on the cytoplasmic side. The helical transmembrane segment at 109 to 131 (AYHYSYICVGEGVAWIIGWALIL) threads the bilayer. The Vacuolar segment spans residues 132–171 (EYTIGGSAVARGISPNLALIFGGEDGLPAILARHQIPGLD). A helical transmembrane segment spans residues 172 to 192 (IVVDPCAAILVFVVTGLLCMG). Residues 193-200 (IKESTFAQ) are Cytoplasmic-facing. A helical membrane pass occupies residues 201 to 221 (GIVTAVNVCVLLFVIVAGSYL). At 222 to 235 (GFKTGWPGYELPTG) the chain is on the vacuolar side. A helical membrane pass occupies residues 236 to 256 (FFPFGVDGMFAGSATVFFAFI). The Cytoplasmic portion of the chain corresponds to 257 to 280 (GFDSVASTAEEVRNPQRDLPIGIG). The chain crosses the membrane as a helical span at residues 281–301 (LALLLCCSLYMMVSIVIVGLI). Topologically, residues 302-324 (PYYAMDPDTPISSAFASHDMQWA) are vacuolar. The helical transmembrane segment at 325–345 (VYLITLGAVMALCSALMGALL) threads the bilayer. Residues 346–376 (PQPRILMAMARDGLLPSIFSDINKRTQVPVK) lie on the Cytoplasmic side of the membrane. A helical transmembrane segment spans residues 377–397 (ATVATGLCAATLAFFMDVSQL). Residue A398 is a topological domain, vacuolar. A helical membrane pass occupies residues 399–419 (GMVSVGTLLAFTMVAISVLIL). Topologically, residues 420–493 (RYVPPDEQPL…CLVLSEETRR (74 aa)) are cytoplasmic. The chain crosses the membrane as a helical span at residues 494 to 514 (IVAGWSIMFTCVGAFLLSYAA). Topologically, residues 515–524 (SSLSFPGLIR) are vacuolar. A helical transmembrane segment spans residues 525–545 (YPLCGVGGCLLLAGLIALSSI). Residues 546–560 (DQDDARHTFGHSGGY) lie on the Cytoplasmic side of the membrane. A helical transmembrane segment spans residues 561–581 (MCPFVPLLPIICILINMYLLV). At 582–585 (NLGS) the chain is on the vacuolar side. The chain crosses the membrane as a helical span at residues 586–606 (ATWARVSVWLLIGVIVYVFYG). Residues 607–635 (RKNSSLANAVYVTTAHAEEIYREHEGSLA) lie on the Cytoplasmic side of the membrane.

The protein belongs to the amino acid-polyamine-organocation (APC) superfamily. Cationic amino acid transporter (CAT) (TC 2.A.3.3) family. In terms of tissue distribution, expressed in roots, stems, flowers, leaves, and siliques.

The protein localises to the vacuole membrane. Functionally, permease involved in the transport of the cationic amino acids. In Arabidopsis thaliana (Mouse-ear cress), this protein is Cationic amino acid transporter 2, vacuolar (CAT2).